The primary structure comprises 121 residues: Putative viral protein-binding protein C1 (121 aa).

Residues 21 to 57 (PWDRTRGHPDVPWRNLTSSPTRPLAQPAGSCMPAEPS) form a disordered region.

Interacts with core protein of hepatitis B virus.

This is Putative viral protein-binding protein C1 from Homo sapiens (Human).